The chain runs to 220 residues: Outer membrane protein assembly factor BamD (220 aa).

A signal peptide spans 1 to 22; that stretch reads MRLKHFKTFLFITMAIIVIGTG. A lipid anchor (N-palmitoyl cysteine) is attached at Cys-23. A lipid anchor (S-diacylglycerol cysteine) is attached at Cys-23.

It belongs to the BamD family. In terms of assembly, part of the Bam complex.

It localises to the cell outer membrane. Part of the outer membrane protein assembly complex, which is involved in assembly and insertion of beta-barrel proteins into the outer membrane. This chain is Outer membrane protein assembly factor BamD, found in Helicobacter pylori (strain ATCC 700392 / 26695) (Campylobacter pylori).